Consider the following 202-residue polypeptide: Orotate phosphoribosyltransferase (202 aa).

5-phospho-alpha-D-ribose 1-diphosphate-binding positions include arginine 94, lysine 98, histidine 100, and glutamate 120–serine 128. Orotate is bound at residue serine 124.

Belongs to the purine/pyrimidine phosphoribosyltransferase family. PyrE subfamily. Homodimer. The cofactor is Mg(2+).

The enzyme catalyses orotidine 5'-phosphate + diphosphate = orotate + 5-phospho-alpha-D-ribose 1-diphosphate. The protein operates within pyrimidine metabolism; UMP biosynthesis via de novo pathway; UMP from orotate: step 1/2. In terms of biological role, catalyzes the transfer of a ribosyl phosphate group from 5-phosphoribose 1-diphosphate to orotate, leading to the formation of orotidine monophosphate (OMP). In Staphylococcus haemolyticus (strain JCSC1435), this protein is Orotate phosphoribosyltransferase.